The sequence spans 30 residues: Photosystem I reaction center subunit XII (30 aa).

Residues 7-29 (IYTVLCIALLAGILAIRLGSTLY) traverse the membrane as a helical segment.

Belongs to the PsaM family.

The protein resides in the plastid. Its subcellular location is the chloroplast thylakoid membrane. This chain is Photosystem I reaction center subunit XII, found in Phaeodactylum tricornutum (strain CCAP 1055/1).